Consider the following 111-residue polypeptide: WAP four-disulfide core domain protein 12 (111 aa).

Positions 1-23 (MGSSSFLVLMVSLTLVTLVAVEG) are cleaved as a signal peptide. The WAP domain maps to 27-74 (DIEKAGVCPADNVRCFKSDPPQCHTDQDCLGERKCCYLHCGFKCVIPV). 4 cysteine pairs are disulfide-bonded: Cys-34–Cys-62, Cys-41–Cys-66, Cys-49–Cys-61, and Cys-55–Cys-70. Residues 80–111 (GGNKDEDVSRPYPEPGWEAKCPGSSSTRCPQK) are disordered. Positions 102–111 (GSSSTRCPQK) are enriched in polar residues.

The protein localises to the secreted. Antibacterial protein. Putative acid-stable proteinase inhibitor. This Pan troglodytes (Chimpanzee) protein is WAP four-disulfide core domain protein 12 (WFDC12).